A 210-amino-acid chain; its full sequence is MTTLETLKWDGKKAGKVSIDLKVAKETSSADLIHRAVLRQLANKRQGTASTLTRSEVRGGGRKPYKQKGTGRARQGSIRTPLRPGGGVIFGPKPRSYNLDMNRKERRLALRTALMSRISDFKTVEDFGSTLDQPKTSEIINGLSRLGIEKTEKVLVILDNPSDVIKKSINNLEKVKLIAADQLNVFDILNANKLVIGQSAINKIQEVYAS.

The span at 44–54 (KRQGTASTLTR) shows a compositional bias: polar residues. Residues 44 to 94 (KRQGTASTLTRSEVRGGGRKPYKQKGTGRARQGSIRTPLRPGGGVIFGPKP) are disordered. Basic residues predominate over residues 60–71 (GGRKPYKQKGTG).

It belongs to the universal ribosomal protein uL4 family. In terms of assembly, part of the 50S ribosomal subunit.

Functionally, one of the primary rRNA binding proteins, this protein initially binds near the 5'-end of the 23S rRNA. It is important during the early stages of 50S assembly. It makes multiple contacts with different domains of the 23S rRNA in the assembled 50S subunit and ribosome. Its function is as follows. Forms part of the polypeptide exit tunnel. The chain is Large ribosomal subunit protein uL4 from Prochlorococcus marinus subsp. pastoris (strain CCMP1986 / NIES-2087 / MED4).